The primary structure comprises 987 residues: Sarcosine oxidase subunit alpha (987 aa).

Positions 198, 199, 206, 244, and 445 each coordinate NAD(+). Residues T714 and E806 each contribute to the (6R)-5,10-methylene-5,6,7,8-tetrahydrofolate site.

It belongs to the GcvT family. In terms of assembly, heterotetramer composed of subunits alpha (SoxA), beta (SoxB), gamma (SoxG) and delta (SoxD). NAD(+) is required as a cofactor.

Its subcellular location is the cytoplasm. It catalyses the reaction sarcosine + (6S)-5,6,7,8-tetrahydrofolate + O2 = (6R)-5,10-methylene-5,6,7,8-tetrahydrofolate + glycine + H2O2. The catalysed reaction is sarcosine + O2 + H2O = formaldehyde + glycine + H2O2. Its function is as follows. In the presence of tetrahydrofolate, catalyzes the oxidative demethylation of sarcosine to yield glycine, 5,10-methylenetetrahydrofolate and hydrogen peroxide. In the absence of tetrahydrofolate, catalyzes the oxidative demethylation of sarcosine to yield glycine, formaldehyde and hydrogen peroxide. This chain is Sarcosine oxidase subunit alpha (soxA), found in Rhizobium meliloti (strain 1021) (Ensifer meliloti).